Here is a 118-residue protein sequence, read N- to C-terminus: Large ribosomal subunit protein bL20 (118 aa).

The protein belongs to the bacterial ribosomal protein bL20 family.

Functionally, binds directly to 23S ribosomal RNA and is necessary for the in vitro assembly process of the 50S ribosomal subunit. It is not involved in the protein synthesizing functions of that subunit. The protein is Large ribosomal subunit protein bL20 of Sulfurovum sp. (strain NBC37-1).